A 166-amino-acid polypeptide reads, in one-letter code: Cytochrome c-550 2 (166 aa).

The N-terminal stretch at 1–32 (MFSRQFGRLATLALALAVAGCAGGEQSTTAEA) is a signal peptide. Heme c-binding residues include Cys-71, Cys-74, and His-75.

Belongs to the cytochrome c family. PsbV subfamily. Heme c is required as a cofactor.

It localises to the cell inner membrane. Functionally, probable low-potential cytochrome c, might function in photosystem II (PSII). This is Cytochrome c-550 2 (psbV2) from Gloeobacter violaceus (strain ATCC 29082 / PCC 7421).